The chain runs to 279 residues: Acyl-coenzyme A thioesterase MBLAC2 (279 aa).

S2 is modified (N-acetylserine). Residues H83, H85, D87, H88, H170, D189, and H231 each contribute to the Zn(2+) site. The S-palmitoyl cysteine moiety is linked to residue C254.

The protein belongs to the metallo-beta-lactamase superfamily. Glyoxalase II family. Zn(2+) serves as cofactor. In terms of processing, palmitoylated on Cys-254 by ZDHHC20.

Its subcellular location is the endoplasmic reticulum membrane. The protein resides in the cell membrane. It catalyses the reaction hexadecanoyl-CoA + H2O = hexadecanoate + CoA + H(+). The catalysed reaction is dodecanoyl-CoA + H2O = dodecanoate + CoA + H(+). It carries out the reaction tetradecanoyl-CoA + H2O = tetradecanoate + CoA + H(+). The enzyme catalyses octadecanoyl-CoA + H2O = octadecanoate + CoA + H(+). It catalyses the reaction a beta-lactam + H2O = a substituted beta-amino acid. Beta-lactamase activity is inhibited by sulbactam. Its function is as follows. Acyl-CoA thioesterases are a group of enzymes that catalyze the hydrolysis of acyl-CoAs to the free fatty acid and coenzyme A (CoASH), providing the potential to regulate intracellular levels of acyl-CoAs, free fatty acids and CoASH. Has an acyl-CoA thioesterase activity towards the long chain fatty acyl-CoA thioester palmitoyl-CoA (hexadecanoyl-CoA; C16:0-CoA). Displays a substrate preference for fatty acyl-CoAs with chain-lengths C12-C18. Possesses beta-lactamase activity, catalyzing the hydrolysis of penicillin G and nitrocefin. Exhibits no activity towards other beta-lactam antibiotic classes including cephalosporins (cefotaxime) and carbapenems (imipenem). This Homo sapiens (Human) protein is Acyl-coenzyme A thioesterase MBLAC2 (MBLAC2).